The following is a 271-amino-acid chain: 2,3,4,5-tetrahydropyridine-2,6-dicarboxylate N-succinyltransferase (271 aa).

This sequence belongs to the transferase hexapeptide repeat family.

It is found in the cytoplasm. The catalysed reaction is (S)-2,3,4,5-tetrahydrodipicolinate + succinyl-CoA + H2O = (S)-2-succinylamino-6-oxoheptanedioate + CoA. It functions in the pathway amino-acid biosynthesis; L-lysine biosynthesis via DAP pathway; LL-2,6-diaminopimelate from (S)-tetrahydrodipicolinate (succinylase route): step 1/3. The polypeptide is 2,3,4,5-tetrahydropyridine-2,6-dicarboxylate N-succinyltransferase (Coxiella burnetii (strain CbuG_Q212) (Coxiella burnetii (strain Q212))).